A 457-amino-acid chain; its full sequence is Vasoactive intestinal polypeptide receptor 1 (457 aa).

Residues Met1 to Ala30 form the signal peptide. Over Ala31–Ser141 the chain is Extracellular. 5 disulfides stabilise this stretch: Cys37–Cys208, Cys50–Cys72, Cys63–Cys105, Cys86–Cys122, and Cys215–Cys285. 3 N-linked (GlcNAc...) asparagine glycosylation sites follow: Asn58, Asn69, and Asn100. The helical transmembrane segment at Val142 to Leu166 threads the bilayer. Over Phe167–Arg174 the chain is Cytoplasmic. Residues Asn175 to Asp196 traverse the membrane as a helical segment. The Extracellular portion of the chain corresponds to Leu197–Lys216. Residues Ala217–Tyr241 form a helical membrane-spanning segment. Residues Thr242–Tyr254 lie on the Cytoplasmic side of the membrane. A helical transmembrane segment spans residues Phe255 to Ala276. Over Arg277–Ser291 the chain is Extracellular. Asn290 carries an N-linked (GlcNAc...) asparagine glycan. A helical transmembrane segment spans residues Ser292 to Ile316. Residues Arg317 to Arg338 are Cytoplasmic-facing. A helical transmembrane segment spans residues Leu339–Phe359. At Phe360 to Glu367 the chain is on the extracellular side. A helical membrane pass occupies residues Val368–Leu391. The Cytoplasmic segment spans residues Asn392–Val457.

This sequence belongs to the G-protein coupled receptor 2 family. Interacts with ADCYAP1/PACAP; activated by both PACAP27 and PACAP38 neuropeptides. Interacts with VIP; the interaction results in VIPR1 activation. As to expression, in lung, HT-29 colonic epithelial cells, Raji B-lymphoblasts. Lesser extent in brain, heart, kidney, liver and placenta. Not expressed in CD4+ or CD8+ T-cells. Expressed in the T-cell lines HARRIS, HuT 78, Jurkat and SUP-T1, but not in the T-cell lines Peer, MOLT-4, HSB and YT.

It localises to the cell membrane. Functionally, g protein-coupled receptor activated by the neuropeptides vasoactive intestinal peptide (VIP) and pituitary adenylate cyclase-activating polypeptide (ADCYAP1/PACAP). Binds VIP and both PACAP27 and PACAP38 bioactive peptides with the following order of ligand affinity VIP = PACAP27 &gt; PACAP38. Ligand binding causes a conformation change that triggers signaling via guanine nucleotide-binding proteins (G proteins) and modulates the activity of downstream effectors. Activates cAMP-dependent pathway. The sequence is that of Vasoactive intestinal polypeptide receptor 1 from Homo sapiens (Human).